The sequence spans 252 residues: Ribosomal RNA small subunit methyltransferase J (252 aa).

S-adenosyl-L-methionine-binding positions include Arg-101–Asp-102, Glu-117–Arg-118, Ser-153–Ser-154, and Asp-171.

Belongs to the methyltransferase superfamily. RsmJ family.

The protein localises to the cytoplasm. It catalyses the reaction guanosine(1516) in 16S rRNA + S-adenosyl-L-methionine = N(2)-methylguanosine(1516) in 16S rRNA + S-adenosyl-L-homocysteine + H(+). Specifically methylates the guanosine in position 1516 of 16S rRNA. The protein is Ribosomal RNA small subunit methyltransferase J of Citrobacter koseri (strain ATCC BAA-895 / CDC 4225-83 / SGSC4696).